The chain runs to 564 residues: Arginine--tRNA ligase (564 aa).

Positions 136 to 146 match the 'HIGH' region motif; it reads ANPTGPLHMGN.

It belongs to the class-I aminoacyl-tRNA synthetase family. Monomer.

The protein localises to the cytoplasm. The enzyme catalyses tRNA(Arg) + L-arginine + ATP = L-arginyl-tRNA(Arg) + AMP + diphosphate. The polypeptide is Arginine--tRNA ligase (Acetivibrio thermocellus (strain ATCC 27405 / DSM 1237 / JCM 9322 / NBRC 103400 / NCIMB 10682 / NRRL B-4536 / VPI 7372) (Clostridium thermocellum)).